The chain runs to 420 residues: Serine hydroxymethyltransferase (420 aa).

Residues leucine 121 and 125–127 contribute to the (6S)-5,6,7,8-tetrahydrofolate site; that span reads GHL. The residue at position 230 (lysine 230) is an N6-(pyridoxal phosphate)lysine. Residues glutamate 246 and 354 to 356 each bind (6S)-5,6,7,8-tetrahydrofolate; that span reads SPF.

Belongs to the SHMT family. As to quaternary structure, homodimer. Pyridoxal 5'-phosphate is required as a cofactor.

It is found in the cytoplasm. The catalysed reaction is (6R)-5,10-methylene-5,6,7,8-tetrahydrofolate + glycine + H2O = (6S)-5,6,7,8-tetrahydrofolate + L-serine. It functions in the pathway one-carbon metabolism; tetrahydrofolate interconversion. Its pathway is amino-acid biosynthesis; glycine biosynthesis; glycine from L-serine: step 1/1. In terms of biological role, catalyzes the reversible interconversion of serine and glycine with tetrahydrofolate (THF) serving as the one-carbon carrier. This reaction serves as the major source of one-carbon groups required for the biosynthesis of purines, thymidylate, methionine, and other important biomolecules. Also exhibits THF-independent aldolase activity toward beta-hydroxyamino acids, producing glycine and aldehydes, via a retro-aldol mechanism. The chain is Serine hydroxymethyltransferase from Rickettsia peacockii (strain Rustic).